A 284-amino-acid polypeptide reads, in one-letter code: Phosphonates import ATP-binding protein PhnC 2 (284 aa).

The ABC transporter domain maps to 5 to 253 (IEVRGLSKSF…MLRDLYGTEA (249 aa)). ATP is bound at residue 38-45 (GASGSGKS).

Belongs to the ABC transporter superfamily. Phosphonates importer (TC 3.A.1.9.1) family. In terms of assembly, the complex is composed of two ATP-binding proteins (PhnC), two transmembrane proteins (PhnE) and a solute-binding protein (PhnD).

It localises to the cell inner membrane. The catalysed reaction is phosphonate(out) + ATP + H2O = phosphonate(in) + ADP + phosphate + H(+). Its function is as follows. Part of the ABC transporter complex PhnCDE involved in phosphonates import. Responsible for energy coupling to the transport system. The chain is Phosphonates import ATP-binding protein PhnC 2 from Cupriavidus necator (strain ATCC 17699 / DSM 428 / KCTC 22496 / NCIMB 10442 / H16 / Stanier 337) (Ralstonia eutropha).